We begin with the raw amino-acid sequence, 281 residues long: Probable feruloyl esterase A (281 aa).

Residues 1–21 (MKNFFSMHAILLACSAGAGLA) form the signal peptide. Intrachain disulfides connect C50-C279, C112-C115, and C248-C255. Residue D98 coordinates substrate. N100 carries an N-linked (GlcNAc...) asparagine glycan. Residue Y101 participates in substrate binding. Residue S154 is the Nucleophile of the active site. N-linked (GlcNAc...) asparagine glycosylation is present at N173. D215 acts as the Charge relay system in catalysis. A substrate-binding site is contributed by H268. H268 functions as the Charge relay system in the catalytic mechanism.

Belongs to the AB hydrolase superfamily. FaeA family.

The protein resides in the secreted. It catalyses the reaction feruloyl-polysaccharide + H2O = ferulate + polysaccharide.. Its function is as follows. Involved in degradation of plant cell walls. Hydrolyzes the feruloyl-arabinose ester bond in arabinoxylans, and the feruloyl-galactose ester bond in pectin. In Aspergillus oryzae (strain ATCC 42149 / RIB 40) (Yellow koji mold), this protein is Probable feruloyl esterase A (faeA).